Consider the following 160-residue polypeptide: SsrA-binding protein (160 aa).

Residues K133 to Q160 form a disordered region. Residues D137 to R149 are compositionally biased toward basic and acidic residues.

It belongs to the SmpB family.

It is found in the cytoplasm. Required for rescue of stalled ribosomes mediated by trans-translation. Binds to transfer-messenger RNA (tmRNA), required for stable association of tmRNA with ribosomes. tmRNA and SmpB together mimic tRNA shape, replacing the anticodon stem-loop with SmpB. tmRNA is encoded by the ssrA gene; the 2 termini fold to resemble tRNA(Ala) and it encodes a 'tag peptide', a short internal open reading frame. During trans-translation Ala-aminoacylated tmRNA acts like a tRNA, entering the A-site of stalled ribosomes, displacing the stalled mRNA. The ribosome then switches to translate the ORF on the tmRNA; the nascent peptide is terminated with the 'tag peptide' encoded by the tmRNA and targeted for degradation. The ribosome is freed to recommence translation, which seems to be the essential function of trans-translation. This is SsrA-binding protein from Agrobacterium fabrum (strain C58 / ATCC 33970) (Agrobacterium tumefaciens (strain C58)).